A 215-amino-acid chain; its full sequence is Adenylate kinase (215 aa).

10-15 (GAGKGT) lines the ATP pocket. Positions 30–59 (STGDMFRAAMKNNTELGRKAKSFMDNGDLV) are NMP. AMP is bound by residues Thr31, Arg36, 57-59 (DLV), 85-88 (GFPR), and Gln92. Residues 126–163 (GRWICRTCGKTYHEIYNPPKVAGKCDLDGGELYQRDDD) form an LID region. Arg127 lines the ATP pocket. Residues Cys130 and Cys133 each coordinate Zn(2+). 136–137 (TY) is an ATP binding site. Zn(2+)-binding residues include Cys150 and Asp153. AMP contacts are provided by Arg160 and Arg171. Residue Gln199 participates in ATP binding.

It belongs to the adenylate kinase family. In terms of assembly, monomer.

The protein localises to the cytoplasm. The enzyme catalyses AMP + ATP = 2 ADP. The protein operates within purine metabolism; AMP biosynthesis via salvage pathway; AMP from ADP: step 1/1. In terms of biological role, catalyzes the reversible transfer of the terminal phosphate group between ATP and AMP. Plays an important role in cellular energy homeostasis and in adenine nucleotide metabolism. This chain is Adenylate kinase, found in Listeria monocytogenes serotype 4a (strain HCC23).